The primary structure comprises 229 residues: Orotidine 5'-phosphate decarboxylase (229 aa).

Residues D11, K33, 61 to 70 (DMKLFDISAT), T116, R179, Q188, G208, and R209 contribute to the substrate site. The active-site Proton donor is the K63.

It belongs to the OMP decarboxylase family. Type 1 subfamily. Homodimer.

It carries out the reaction orotidine 5'-phosphate + H(+) = UMP + CO2. It functions in the pathway pyrimidine metabolism; UMP biosynthesis via de novo pathway; UMP from orotate: step 2/2. Catalyzes the decarboxylation of orotidine 5'-monophosphate (OMP) to uridine 5'-monophosphate (UMP). This is Orotidine 5'-phosphate decarboxylase from Jannaschia sp. (strain CCS1).